The sequence spans 125 residues: Large ribosomal subunit protein bL12 (125 aa).

This sequence belongs to the bacterial ribosomal protein bL12 family. In terms of assembly, homodimer. Part of the ribosomal stalk of the 50S ribosomal subunit. Forms a multimeric L10(L12)X complex, where L10 forms an elongated spine to which 2 to 4 L12 dimers bind in a sequential fashion. Binds GTP-bound translation factors.

Functionally, forms part of the ribosomal stalk which helps the ribosome interact with GTP-bound translation factors. Is thus essential for accurate translation. This chain is Large ribosomal subunit protein bL12, found in Francisella tularensis subsp. novicida (strain U112).